Here is a 400-residue protein sequence, read N- to C-terminus: Acetate kinase (400 aa).

N10 contacts Mg(2+). K17 contributes to the ATP binding site. R91 provides a ligand contact to substrate. D150 serves as the catalytic Proton donor/acceptor. Residues 210–214, 285–287, and 333–337 each bind ATP; these read HLGNG, DCR, and GIGEN. Residue E387 participates in Mg(2+) binding.

It belongs to the acetokinase family. Homodimer. Requires Mg(2+) as cofactor. It depends on Mn(2+) as a cofactor.

The protein resides in the cytoplasm. The enzyme catalyses acetate + ATP = acetyl phosphate + ADP. It functions in the pathway metabolic intermediate biosynthesis; acetyl-CoA biosynthesis; acetyl-CoA from acetate: step 1/2. In terms of biological role, catalyzes the formation of acetyl phosphate from acetate and ATP. Can also catalyze the reverse reaction. The sequence is that of Acetate kinase from Salmonella typhi.